The chain runs to 237 residues: Phosphoribosylaminoimidazole-succinocarboxamide synthase (237 aa).

The protein belongs to the SAICAR synthetase family.

The enzyme catalyses 5-amino-1-(5-phospho-D-ribosyl)imidazole-4-carboxylate + L-aspartate + ATP = (2S)-2-[5-amino-1-(5-phospho-beta-D-ribosyl)imidazole-4-carboxamido]succinate + ADP + phosphate + 2 H(+). It participates in purine metabolism; IMP biosynthesis via de novo pathway; 5-amino-1-(5-phospho-D-ribosyl)imidazole-4-carboxamide from 5-amino-1-(5-phospho-D-ribosyl)imidazole-4-carboxylate: step 1/2. This is Phosphoribosylaminoimidazole-succinocarboxamide synthase from Salmonella agona (strain SL483).